The primary structure comprises 241 residues: Small ribosomal subunit protein uS5 (241 aa).

The segment at 1–53 is disordered; it reads MSDNEKETQVAEETQNTQAAAESNNEDRKSRRGQRGEGRRGERRNRREESHEN. Over residues 11–22 the composition is skewed to low complexity; that stretch reads AEETQNTQAAAE. The segment covering 25 to 53 has biased composition (basic and acidic residues); sequence NEDRKSRRGQRGEGRRGERRNRREESHEN. An S5 DRBM domain is found at 55–118; it reads MLDRVVTINR…LDAKKHMFTV (64 aa).

The protein belongs to the universal ribosomal protein uS5 family. As to quaternary structure, part of the 30S ribosomal subunit. Contacts proteins S4 and S8.

In terms of biological role, with S4 and S12 plays an important role in translational accuracy. Functionally, located at the back of the 30S subunit body where it stabilizes the conformation of the head with respect to the body. The sequence is that of Small ribosomal subunit protein uS5 from Bifidobacterium adolescentis (strain ATCC 15703 / DSM 20083 / NCTC 11814 / E194a).